A 67-amino-acid chain; its full sequence is MQVLVRDNNVDQALRALKKKMQREGIFREMKLRRNYEKPSEKRAREKAEAIRRARKLLRKRLEREGY.

It belongs to the bacterial ribosomal protein bS21 family.

This Rhodospirillum centenum (strain ATCC 51521 / SW) protein is Small ribosomal subunit protein bS21.